A 144-amino-acid polypeptide reads, in one-letter code: SsrA-binding protein (144 aa).

This sequence belongs to the SmpB family.

Its subcellular location is the cytoplasm. In terms of biological role, required for rescue of stalled ribosomes mediated by trans-translation. Binds to transfer-messenger RNA (tmRNA), required for stable association of tmRNA with ribosomes. tmRNA and SmpB together mimic tRNA shape, replacing the anticodon stem-loop with SmpB. tmRNA is encoded by the ssrA gene; the 2 termini fold to resemble tRNA(Ala) and it encodes a 'tag peptide', a short internal open reading frame. During trans-translation Ala-aminoacylated tmRNA acts like a tRNA, entering the A-site of stalled ribosomes, displacing the stalled mRNA. The ribosome then switches to translate the ORF on the tmRNA; the nascent peptide is terminated with the 'tag peptide' encoded by the tmRNA and targeted for degradation. The ribosome is freed to recommence translation, which seems to be the essential function of trans-translation. The polypeptide is SsrA-binding protein (Thermus thermophilus (strain ATCC BAA-163 / DSM 7039 / HB27)).